The sequence spans 517 residues: Protein ERGIC-53 (517 aa).

The first 30 residues, methionine 1–serine 30, serve as a signal peptide directing secretion. The Lumenal portion of the chain corresponds to aspartate 31–serine 484. Residues arginine 52–leucine 275 form the L-type lectin-like domain. A carbohydrate contacts are provided by serine 96 and aspartate 129. Aspartate 160, phenylalanine 162, and asparagine 164 together coordinate Ca(2+). The a carbohydrate site is built by asparagine 164 and histidine 186. Aspartate 189 contributes to the Ca(2+) binding site. Cysteine 198 and cysteine 238 are oxidised to a cystine. A carbohydrate is bound at residue glycine 259–leucine 261. A Phosphoserine modification is found at serine 433. Residues threonine 485–tyrosine 505 traverse the membrane as a helical segment. The Cytoplasmic portion of the chain corresponds to arginine 506–phenylalanine 517. The interval arginine 506–phenylalanine 517 is mediates interaction with RAB3GAP1, RAB3GAP2 and UBXN6. The ER export motif signature appears at phenylalanine 516–phenylalanine 517.

As to quaternary structure, exists both as a covalent disulfide-linked homohexamer, and a complex of three disulfide-linked dimers non-covalently kept together. Interacts with MCFD2. May interact with TMEM115. Interacts with RAB3GAP1 and RAB3GAP2. Interacts with UBXN6. Interacts with SERPINA1/alpha1-antitrypsin. Interacts with BET1.

It localises to the endoplasmic reticulum-Golgi intermediate compartment membrane. It is found in the golgi apparatus membrane. The protein resides in the endoplasmic reticulum membrane. Its function is as follows. Mannose-specific lectin. May recognize sugar residues of glycoproteins, glycolipids, or glycosylphosphatidyl inositol anchors and may be involved in the sorting or recycling of proteins, lipids, or both. The LMAN1-MCFD2 complex forms a specific cargo receptor for the ER-to-Golgi transport of selected proteins. In Mus musculus (Mouse), this protein is Protein ERGIC-53 (Lman1).